Reading from the N-terminus, the 680-residue chain is DNA-directed RNA polymerase subunit beta' (680 aa).

Cys69, Cys71, Cys87, and Cys90 together coordinate Zn(2+). The Mg(2+) site is built by Asp489, Asp491, and Asp493.

It belongs to the RNA polymerase beta' chain family. RpoC1 subfamily. In plastids the minimal PEP RNA polymerase catalytic core is composed of four subunits: alpha, beta, beta', and beta''. When a (nuclear-encoded) sigma factor is associated with the core the holoenzyme is formed, which can initiate transcription. Mg(2+) serves as cofactor. Requires Zn(2+) as cofactor.

Its subcellular location is the plastid. It localises to the chloroplast. The catalysed reaction is RNA(n) + a ribonucleoside 5'-triphosphate = RNA(n+1) + diphosphate. Functionally, DNA-dependent RNA polymerase catalyzes the transcription of DNA into RNA using the four ribonucleoside triphosphates as substrates. This Manihot esculenta (Cassava) protein is DNA-directed RNA polymerase subunit beta'.